Here is a 412-residue protein sequence, read N- to C-terminus: UPF0761 membrane protein LPC_2650 (412 aa).

A run of 6 helical transmembrane segments spans residues 36-56 (ALAF…LAIF), 99-119 (LSIW…FTIE), 137-157 (AFLL…LSLA), 177-197 (ILHY…YVVV), 210-230 (GGLV…YYLI), and 241-261 (AFAT…ITLL).

The protein belongs to the UPF0761 family.

It is found in the cell inner membrane. The protein is UPF0761 membrane protein LPC_2650 of Legionella pneumophila (strain Corby).